A 474-amino-acid polypeptide reads, in one-letter code: tRNA-2-methylthio-N(6)-dimethylallyladenosine synthase (474 aa).

In terms of domain architecture, MTTase N-terminal spans 3-120 (KKLHIKTWGC…LPDMIEQVRR (118 aa)). Cys12, Cys49, Cys83, Cys157, Cys161, and Cys164 together coordinate [4Fe-4S] cluster. Residues 143–375 (RAEGPTAFVS…QDRITQQAMR (233 aa)) enclose the Radical SAM core domain. The TRAM domain occupies 378–441 (RHMMGTVQRI…TNSLRGKFIR (64 aa)).

This sequence belongs to the methylthiotransferase family. MiaB subfamily. As to quaternary structure, monomer. The cofactor is [4Fe-4S] cluster.

Its subcellular location is the cytoplasm. It carries out the reaction N(6)-dimethylallyladenosine(37) in tRNA + (sulfur carrier)-SH + AH2 + 2 S-adenosyl-L-methionine = 2-methylsulfanyl-N(6)-dimethylallyladenosine(37) in tRNA + (sulfur carrier)-H + 5'-deoxyadenosine + L-methionine + A + S-adenosyl-L-homocysteine + 2 H(+). Catalyzes the methylthiolation of N6-(dimethylallyl)adenosine (i(6)A), leading to the formation of 2-methylthio-N6-(dimethylallyl)adenosine (ms(2)i(6)A) at position 37 in tRNAs that read codons beginning with uridine. The sequence is that of tRNA-2-methylthio-N(6)-dimethylallyladenosine synthase from Shewanella putrefaciens (strain CN-32 / ATCC BAA-453).